We begin with the raw amino-acid sequence, 597 residues long: Protein kinase C-like 3 (597 aa).

Residues 12–95 (DIKLKTRFHG…AELNIHVFVG (84 aa)) enclose the PB1 domain. The Phorbol-ester/DAG-type zinc finger occupies 127–177 (GHRFQGKRLNRRIQCFICHDYIWGIGRQGFRCVDCRLCVHKKCHRHVRTHC). A disordered region spans residues 181-238 (PQGPNVPVAPSSGVGSLRGGRLDTSSSTTRSGGGIDNGAFHEHEIESPGSAKDMSRST). The Protein kinase domain occupies 253 to 522 (FRLLTVIGRG…LNDMKEHDFF (270 aa)). ATP is bound by residues 259–267 (IGRGSYAKV) and lysine 282. Aspartate 377 serves as the catalytic Proton acceptor. An AGC-kinase C-terminal domain is found at 524-595 (GFIDWEALEQ…VNPLQMSRED (72 aa)).

This sequence belongs to the protein kinase superfamily. AGC Ser/Thr protein kinase family. PKC subfamily. As to quaternary structure, interaction with par-3 required for the peripheral localization of par-6 and to form a par-3/par-6/pkc-3 complex, which is activated when cdc-42 interacts with par-6. Binds avidly to the phosphotyrosine interaction domain (PID) of a novel pkc-3 adapter protein num-1, which enables tethering and targeting of pkc-3 to the cell periphery. It depends on Mg(2+) as a cofactor.

It is found in the cytoplasm. Its subcellular location is the cytoskeleton. The enzyme catalyses L-seryl-[protein] + ATP = O-phospho-L-seryl-[protein] + ADP + H(+). It catalyses the reaction L-threonyl-[protein] + ATP = O-phospho-L-threonyl-[protein] + ADP + H(+). Required for the normal progression of embryogenesis and viability of the organism. Plays an indispensable role in establishing embryonic polarity and in recruiting and maintaining par-6 to the periphery, through interaction with par-3. Required for epithelial cell polarity in the distal spermatheca. Phosphorylates serine residues of num-1. Required for the expression of antimicrobial peptide nlp-29 in response in response to fungal infection or physical injury. The chain is Protein kinase C-like 3 from Caenorhabditis briggsae.